We begin with the raw amino-acid sequence, 550 residues long: Eukaryotic translation initiation factor 3 subunit D-2 (550 aa).

Residues 97 to 126 (RGRGFRPSVHNNPRNVRNQRGRKGNAMGNI) form a disordered region. Residues 287–301 (KFDMLTVNETSQEPP) form an RNA gate region. The disordered stretch occupies residues 530–550 (SDVSEEEESSEDKPFGLSMNN).

This sequence belongs to the eIF-3 subunit D family. In terms of assembly, component of the eukaryotic translation initiation factor 3 (eIF-3) complex. The eIF-3 complex interacts with pix.

Its subcellular location is the cytoplasm. Its function is as follows. mRNA cap-binding component of the eukaryotic translation initiation factor 3 (eIF-3) complex, which is involved in protein synthesis of a specialized repertoire of mRNAs and, together with other initiation factors, stimulates binding of mRNA and methionyl-tRNAi to the 40S ribosome. The eIF-3 complex specifically targets and initiates translation of a subset of mRNAs involved in cell proliferation. In the eIF-3 complex, eif3d specifically recognizes and binds the 7-methylguanosine cap of a subset of mRNAs. The sequence is that of Eukaryotic translation initiation factor 3 subunit D-2 from Drosophila willistoni (Fruit fly).